The primary structure comprises 491 residues: 2,3-bisphosphoglycerate-independent phosphoglycerate mutase (491 aa).

The Mn(2+) site is built by aspartate 11 and serine 61. Serine 61 (phosphoserine intermediate) is an active-site residue. Residues histidine 118, 147-148, arginine 177, arginine 183, 247-250, and lysine 320 contribute to the substrate site; these read RD and RNDR. Positions 386, 390, 427, 428, and 445 each coordinate Mn(2+).

The protein belongs to the BPG-independent phosphoglycerate mutase family. In terms of assembly, monomer. Mn(2+) is required as a cofactor.

It catalyses the reaction (2R)-2-phosphoglycerate = (2R)-3-phosphoglycerate. It functions in the pathway carbohydrate degradation; glycolysis; pyruvate from D-glyceraldehyde 3-phosphate: step 3/5. Catalyzes the interconversion of 2-phosphoglycerate and 3-phosphoglycerate. In Helicobacter pylori (strain J99 / ATCC 700824) (Campylobacter pylori J99), this protein is 2,3-bisphosphoglycerate-independent phosphoglycerate mutase.